The chain runs to 157 residues: Transcription antitermination protein NusB (157 aa).

This sequence belongs to the NusB family.

In terms of biological role, involved in transcription antitermination. Required for transcription of ribosomal RNA (rRNA) genes. Binds specifically to the boxA antiterminator sequence of the ribosomal RNA (rrn) operons. In Xylella fastidiosa (strain M12), this protein is Transcription antitermination protein NusB.